Consider the following 356-residue polypeptide: Nicotinate-nucleotide--dimethylbenzimidazole phosphoribosyltransferase (356 aa).

Glutamate 317 functions as the Proton acceptor in the catalytic mechanism.

The protein belongs to the CobT family. Homodimer.

The catalysed reaction is 5,6-dimethylbenzimidazole + nicotinate beta-D-ribonucleotide = alpha-ribazole 5'-phosphate + nicotinate + H(+). The protein operates within nucleoside biosynthesis; alpha-ribazole biosynthesis; alpha-ribazole from 5,6-dimethylbenzimidazole: step 1/2. In terms of biological role, catalyzes the synthesis of alpha-ribazole-5'-phosphate from nicotinate mononucleotide (NAMN) and 5,6-dimethylbenzimidazole (DMB). This is Nicotinate-nucleotide--dimethylbenzimidazole phosphoribosyltransferase from Salmonella schwarzengrund (strain CVM19633).